The chain runs to 1115 residues: Ubiquitin C-terminal hydrolase 13 (1115 aa).

Residues 1 to 51 are disordered; that stretch reads MTMMTPPPLDQQEDEEMLVPNPDLVEGPQPMEVAQTDPAATAVENPPPEDP. Residues 53 to 178 enclose the MATH domain; sequence SLKFTWTIPM…NDTVLIEAEV (126 aa). The region spanning 198 to 522 is the USP domain; the sequence is VGLKNQGATC…NAYMLVYIRE (325 aa). Catalysis depends on C207, which acts as the Nucleophile. H454 serves as the catalytic Proton acceptor.

The protein belongs to the peptidase C19 family. In terms of assembly, interacts with SIC/RON3. Interacts with RGI1 and RGI2.

It carries out the reaction Thiol-dependent hydrolysis of ester, thioester, amide, peptide and isopeptide bonds formed by the C-terminal Gly of ubiquitin (a 76-residue protein attached to proteins as an intracellular targeting signal).. Recognizes and hydrolyzes the peptide bond at the C-terminal Gly of ubiquitin. Involved in the processing of poly-ubiquitin precursors as well as that of ubiquitinated proteins. Positive regulator of root meristem development that, together with UBP12, prevents the ubiquitination and turnover of RGFR1 induced by the RGF1 hormone peptide, thus influencing PLT1 and PLT2 expression. The protein is Ubiquitin C-terminal hydrolase 13 of Arabidopsis thaliana (Mouse-ear cress).